A 212-amino-acid polypeptide reads, in one-letter code: Uridine kinase (212 aa).

Residue 13 to 20 (GGSGSGKT) coordinates ATP.

This sequence belongs to the uridine kinase family.

It localises to the cytoplasm. The enzyme catalyses uridine + ATP = UMP + ADP + H(+). The catalysed reaction is cytidine + ATP = CMP + ADP + H(+). The protein operates within pyrimidine metabolism; CTP biosynthesis via salvage pathway; CTP from cytidine: step 1/3. It functions in the pathway pyrimidine metabolism; UMP biosynthesis via salvage pathway; UMP from uridine: step 1/1. This is Uridine kinase from Bacillus cereus (strain ATCC 10987 / NRS 248).